A 624-amino-acid chain; its full sequence is E3 ubiquitin-protein ligase RLIM (624 aa).

M1 carries the post-translational modification N-acetylmethionine. Positions 1–11 are enriched in basic and acidic residues; sequence MENSDSNDKGS. Disordered stretches follow at residues 1-25, 72-251, 257-276, 291-363, and 424-522; these read MENS…QMDR, KEGP…SQTF, NETE…QQIS, TRNA…RGGF, and SDSE…TFDE. Over residues 104-132 the composition is skewed to polar residues; it reads SVRQTGNTTRSGQRGNQSWRAVSRTNPNS. Over residues 142–153 the composition is skewed to low complexity; sequence NVNRNNGSQNSE. S164 is modified (phosphoserine). Over residues 165–188 the composition is skewed to polar residues; the sequence is GENVENNSQRQVENPRSESTSARP. 4 positions are modified to phosphoserine: S195, S228, S230, and S276. Positions 214-229 are enriched in basic and acidic residues; sequence RSPDHRRTRARAERSR. The segment covering 291 to 315 has biased composition (polar residues); that stretch reads TRNASQGAGSSDTAASGESTGSGQR. Over residues 329–339 the composition is skewed to basic and acidic residues; sequence RPGEYRQRDSI. The span at 340-356 shows a compositional bias: polar residues; it reads ASRTRSRSQTPNNTVTY. Positions 445 to 454 are enriched in gly residues; it reads GRGGSGGGSS. Positions 455–507 are enriched in low complexity; the sequence is SGSSSSSSSSSSSSSSSSSSSSPSSSSGGESSETSSDLFEGSNEGSSSSGSSG. The RING-type zinc-finger motif lies at 570-611; sequence CSVCITEYTEGNKLRKLPCSHEYHVHCIDRWLSENSTCPICR. The short motif at 621 to 624 is the PDZ-binding element; that stretch reads ESVV.

The protein belongs to the RNF12 family. As to quaternary structure, interacts with LIM/homeobox factors such as LHX3. Interacts with LDB1, LDB2 and SIN3A. Interacts with LIMK1. Interacts (via N-terminus) with TERF1. Interacts (via C-terminus) with ESR1. As to expression, expressed in many tissues.

It is found in the nucleus. It carries out the reaction S-ubiquitinyl-[E2 ubiquitin-conjugating enzyme]-L-cysteine + [acceptor protein]-L-lysine = [E2 ubiquitin-conjugating enzyme]-L-cysteine + N(6)-ubiquitinyl-[acceptor protein]-L-lysine.. It functions in the pathway protein modification; protein ubiquitination. E3 ubiquitin-protein ligase. Acts as a negative coregulator for LIM homeodomain transcription factors by mediating the ubiquitination and subsequent degradation of LIM cofactors LDB1 and LDB2 and by mediating the recruitment the SIN3a/histone deacetylase corepressor complex. Ubiquitination and degradation of LIM cofactors LDB1 and LDB2 allows DNA-bound LIM homeodomain transcription factors to interact with other protein partners such as RLIM. Plays a role in telomere length-mediated growth suppression by mediating the ubiquitination and degradation of TERF1. By targeting ZFP42 for degradation, acts as an activator of random inactivation of X chromosome in the embryo, a stochastic process in which one X chromosome is inactivated to minimize sex-related dosage differences of X-encoded genes in somatic cells of female placental mammals. This Homo sapiens (Human) protein is E3 ubiquitin-protein ligase RLIM (RLIM).